The primary structure comprises 584 residues: Probable pectinesterase/pectinesterase inhibitor (584 aa).

The signal sequence occupies residues methionine 1–glycine 22. The pectinesterase inhibitor stretch occupies residues asparagine 40–isoleucine 191. 2 N-linked (GlcNAc...) asparagine glycosylation sites follow: asparagine 91 and asparagine 105. A disordered region spans residues alanine 246 to glycine 267. The segment at threonine 272–asparagine 571 is pectinesterase. 2 residues coordinate substrate: threonine 349 and glutamine 379. The active-site Proton donor; for pectinesterase activity is the aspartate 402. Aspartate 423 (nucleophile; for pectinesterase activity) is an active-site residue. Residues arginine 492 and tryptophan 494 each contribute to the substrate site.

This sequence in the N-terminal section; belongs to the PMEI family. The protein in the C-terminal section; belongs to the pectinesterase family. In terms of tissue distribution, pollen, and at much lower levels in pistils and petals.

It is found in the secreted. The protein resides in the cell wall. It carries out the reaction [(1-&gt;4)-alpha-D-galacturonosyl methyl ester](n) + n H2O = [(1-&gt;4)-alpha-D-galacturonosyl](n) + n methanol + n H(+). It participates in glycan metabolism; pectin degradation; 2-dehydro-3-deoxy-D-gluconate from pectin: step 1/5. Functionally, acts in the modification of cell walls via demethylesterification of cell wall pectin. The sequence is that of Probable pectinesterase/pectinesterase inhibitor (BP19) from Brassica napus (Rape).